A 207-amino-acid polypeptide reads, in one-letter code: Outer-membrane lipoprotein LolB (207 aa).

The signal sequence occupies residues 1 to 21; it reads MTLPDFRLIRLLPLASLVLTA. The N-palmitoyl cysteine moiety is linked to residue Cys-22. The S-diacylglycerol cysteine moiety is linked to residue Cys-22.

The protein belongs to the LolB family. As to quaternary structure, monomer.

It localises to the cell outer membrane. Functionally, plays a critical role in the incorporation of lipoproteins in the outer membrane after they are released by the LolA protein. The sequence is that of Outer-membrane lipoprotein LolB from Salmonella agona (strain SL483).